We begin with the raw amino-acid sequence, 139 residues long: Large ribosomal subunit protein uL16 (139 aa).

A compositionally biased stretch (basic residues) spans 1–16; sequence MLIPKRTKYRKQHRPD. Positions 1-23 are disordered; it reads MLIPKRTKYRKQHRPDRHGMSKG.

This sequence belongs to the universal ribosomal protein uL16 family. In terms of assembly, part of the 50S ribosomal subunit.

In terms of biological role, binds 23S rRNA and is also seen to make contacts with the A and possibly P site tRNAs. The chain is Large ribosomal subunit protein uL16 from Bifidobacterium animalis subsp. lactis (strain AD011).